An 84-amino-acid polypeptide reads, in one-letter code: Toxin To5 (84 aa).

The signal sequence occupies residues 1–19 (MKAIIFFIGCLMLIDLVAG). Residues 21–82 (RSGYPVTQKG…IWGSYPNNCG (62 aa)) enclose the LCN-type CS-alpha/beta domain. Cystine bridges form between Cys-31/Cys-81, Cys-35/Cys-57, Cys-43/Cys-62, and Cys-47/Cys-64. Position 81 is a cysteine amide (Cys-81).

As to expression, expressed by the venom gland.

The protein resides in the secreted. Its function is as follows. Beta toxins bind voltage-independently at site-4 of sodium channels (Nav) and shift the voltage of activation toward more negative potentials thereby affecting sodium channel activation and promoting spontaneous and repetitive firing. In Tityus obscurus (Amazonian scorpion), this protein is Toxin To5.